A 174-amino-acid chain; its full sequence is CD164 sialomucin-like 2 protein (174 aa).

Positions 1–29 (MEAPGPRALRTALCGGCCCLLLCAQLAVA) are cleaved as a signal peptide. The Extracellular segment spans residues 30–141 (GKGARGFGRG…AHSPGFDGAS (112 aa)). Residues asparagine 71 and asparagine 103 are each glycosylated (N-linked (GlcNAc...) asparagine). Residues 142-162 (FIGGVVLVLSLQAVAFFVLHF) traverse the membrane as a helical segment. The Cytoplasmic portion of the chain corresponds to 163–174 (LKAKDSTYQTLI).

Belongs to the CD164 family.

It is found in the membrane. The chain is CD164 sialomucin-like 2 protein (CD164L2) from Homo sapiens (Human).